A 366-amino-acid chain; its full sequence is uncharacterized protein (366 aa).

The interval 199-267 (QKKQIEDEEK…QLKDAQAKRD (69 aa)) is disordered.

This is an uncharacterized protein from Haemophilus influenzae (strain ATCC 51907 / DSM 11121 / KW20 / Rd).